The primary structure comprises 103 residues: Putative membrane protein insertion efficiency factor (103 aa).

This sequence belongs to the UPF0161 family.

It localises to the cell membrane. In terms of biological role, could be involved in insertion of integral membrane proteins into the membrane. The sequence is that of Putative membrane protein insertion efficiency factor from Clavibacter sepedonicus (Clavibacter michiganensis subsp. sepedonicus).